A 201-amino-acid polypeptide reads, in one-letter code: Charged multivesicular body protein 6 (201 aa).

Residue Gly2 is the site of N-myristoyl glycine attachment. The stretch at 10-145 (QSRVTEQDKA…YQRQIDELLA (136 aa)) forms a coiled coil. Ser119 is subject to Phosphoserine. Thr130 bears the Phosphothreonine mark. A Type-2 MIT-interacting motif motif is present at residues 168–179 (IELPEVPSEPLP). The interaction with VPS4A stretch occupies residues 170-181 (LPEVPSEPLPEK).

This sequence belongs to the SNF7 family. As to quaternary structure, probable core component of the endosomal sorting required for transport complex III (ESCRT-III). ESCRT-III components are thought to multimerize to form a flat lattice on the perimeter membrane of the endosome. Several assembly forms of ESCRT-III may exist that interact and act sequentially. Interacts with VPS4A; the interaction is direct. Interacts with VPS4B; the interaction is direct. Interacts with CHMP4A, CHMP4B and CHMP4C. Interacts with SNF8, VPS25 and VPS36. Post-translationally, ISGylated in a CHMP5-dependent manner. Isgylation weakens its interaction with VPS4A. As to expression, ubiquitously expressed.

The protein resides in the endomembrane system. The protein localises to the endosome membrane. It localises to the late endosome membrane. It is found in the membrane. Probable core component of the endosomal sorting required for transport complex III (ESCRT-III) which is involved in multivesicular bodies (MVBs) formation and sorting of endosomal cargo proteins into MVBs. MVBs contain intraluminal vesicles (ILVs) that are generated by invagination and scission from the limiting membrane of the endosome and mostly are delivered to lysosomes enabling degradation of membrane proteins, such as stimulated growth factor receptors, lysosomal enzymes and lipids. The MVB pathway appears to require the sequential function of ESCRT-O, -I,-II and -III complexes. ESCRT-III proteins mostly dissociate from the invaginating membrane before the ILV is released. The ESCRT machinery also functions in topologically equivalent membrane fission events, such as the terminal stages of cytokinesis and the budding of enveloped viruses (HIV-1 and other lentiviruses). ESCRT-III proteins are believed to mediate the necessary vesicle extrusion and/or membrane fission activities, possibly in conjunction with the AAA ATPase VPS4. In the ESCRT-III complex, it probably serves as an acceptor for the ESCRT-II complex on endosomal membranes. In Homo sapiens (Human), this protein is Charged multivesicular body protein 6 (CHMP6).